A 158-amino-acid polypeptide reads, in one-letter code: Crossover junction endodeoxyribonuclease RuvC (158 aa).

Catalysis depends on residues Asp-7, Glu-66, and Asp-139. Positions 7, 66, and 139 each coordinate Mg(2+).

Belongs to the RuvC family. In terms of assembly, homodimer which binds Holliday junction (HJ) DNA. The HJ becomes 2-fold symmetrical on binding to RuvC with unstacked arms; it has a different conformation from HJ DNA in complex with RuvA. In the full resolvosome a probable DNA-RuvA(4)-RuvB(12)-RuvC(2) complex forms which resolves the HJ. It depends on Mg(2+) as a cofactor.

The protein resides in the cytoplasm. The catalysed reaction is Endonucleolytic cleavage at a junction such as a reciprocal single-stranded crossover between two homologous DNA duplexes (Holliday junction).. Its function is as follows. The RuvA-RuvB-RuvC complex processes Holliday junction (HJ) DNA during genetic recombination and DNA repair. Endonuclease that resolves HJ intermediates. Cleaves cruciform DNA by making single-stranded nicks across the HJ at symmetrical positions within the homologous arms, yielding a 5'-phosphate and a 3'-hydroxyl group; requires a central core of homology in the junction. The consensus cleavage sequence is 5'-(A/T)TT(C/G)-3'. Cleavage occurs on the 3'-side of the TT dinucleotide at the point of strand exchange. HJ branch migration catalyzed by RuvA-RuvB allows RuvC to scan DNA until it finds its consensus sequence, where it cleaves and resolves the cruciform DNA. The chain is Crossover junction endodeoxyribonuclease RuvC from Campylobacter hominis (strain ATCC BAA-381 / DSM 21671 / CCUG 45161 / LMG 19568 / NCTC 13146 / CH001A).